Consider the following 60-residue polypeptide: Large ribosomal subunit protein bL32 (60 aa).

Positions 1–23 are disordered; it reads MAVPRNRHSNARKNIRRSHHAKK.

This sequence belongs to the bacterial ribosomal protein bL32 family.

In Chlamydia caviae (strain ATCC VR-813 / DSM 19441 / 03DC25 / GPIC) (Chlamydophila caviae), this protein is Large ribosomal subunit protein bL32.